A 395-amino-acid chain; its full sequence is Long-chain-alcohol dehydrogenase 1 (395 aa).

NAD(+) is bound by residues 98–102 (GSALD) and 141–144 (TTSG).

It belongs to the iron-containing alcohol dehydrogenase family. Homooctamer.

It carries out the reaction glycerol + NAD(+) = dihydroxyacetone + NADH + H(+). It catalyses the reaction a long-chain primary fatty alcohol + 2 NAD(+) + H2O = a long-chain fatty acid + 2 NADH + 3 H(+). In terms of biological role, long-chain alkyl alcohol dehydrogenase that can oxidize a broad range of alkyl alcohols from ethanol to 1-triacontanol (C2 to C30) as well as 1,3-propanediol and acetaldehyde. The best substrate is ethanol. Also oxidizes glycerol. The polypeptide is Long-chain-alcohol dehydrogenase 1 (adh1) (Geobacillus thermodenitrificans (strain NG80-2)).